The following is a 578-amino-acid chain: GPI-anchor transamidase component PIGT (578 aa).

A signal peptide spans 1 to 21; the sequence is MAAAMPLALLVLLLLGPGGWC. Over 22–525 the chain is Lumenal; sequence LAEPPRDSLR…NLPTPDFSMP (504 aa). N-linked (GlcNAc...) asparagine glycosylation occurs at Asn-164. 2 cysteine pairs are disulfide-bonded: Cys-195–Cys-272 and Cys-226–Cys-231. N-linked (GlcNAc...) asparagine glycosylation is found at Asn-291 and Asn-327. A 2-acyl-6-[6-phosphoethanolamine-alpha-D-mannosyl-(1-&gt;2)-6-phosphoethanolamine-alpha-D-mannosyl-(1-&gt;6)-2-phosphoethanolamine-alpha-D-mannosyl-(1-&gt;4)-alpha-D-glucosaminyl]-1-(1-radyl,2-acyl-sn-glycero-3-phospho)-1D-myo-inositol contacts are provided by Asn-461, Asp-521, Ser-523, and Asn-527. The chain crosses the membrane as a helical span at residues 526 to 548; the sequence is YNVICLTCTVVAVCYGSFYNLLT. The Cytoplasmic segment spans residues 549–578; it reads RTFHIEEPRTGGLAKRLANLIRRARGVPPL.

The protein belongs to the PIGT family. In terms of assembly, heteropentamer. Part of the GPI-anchor transamidase complex, consisting of PIGK, PIGT, PIGS, PIGU and GAA1. In terms of processing, the disulfide bond between PIGK/GPI8 and PIGT is important for normal enzyme activity.

The protein localises to the endoplasmic reticulum membrane. The protein operates within glycolipid biosynthesis; glycosylphosphatidylinositol-anchor biosynthesis. Its function is as follows. Component of the glycosylphosphatidylinositol-anchor (GPI-anchor) transamidase (GPI-T) complex that catalyzes the formation of the linkage between a proprotein and a GPI-anchor and participates in GPI anchored protein biosynthesis. May play a crucial role in GPI-T complex assembly in the luminal layer. Binds GPI-anchor. The chain is GPI-anchor transamidase component PIGT from Homo sapiens (Human).